The sequence spans 224 residues: Phosphoribosyltransferase domain-containing protein 1 (224 aa).

Mg(2+)-binding residues include Glu-140 and Asp-141. GMP is bound by residues 140–148 (EDIINTGRT), Lys-172, 193–194 (FV), and Asp-200. Asp-200 lines the Mg(2+) pocket.

It belongs to the purine/pyrimidine phosphoribosyltransferase family.

This is Phosphoribosyltransferase domain-containing protein 1 (prtfdc1) from Xenopus laevis (African clawed frog).